A 230-amino-acid polypeptide reads, in one-letter code: V-type proton ATPase subunit E (230 aa).

It belongs to the V-ATPase E subunit family. In terms of assembly, V-ATPase is a heteromultimeric enzyme composed of a peripheral catalytic V1 complex (components A to H) attached to an integral membrane V0 proton pore complex (components: a, c, c', c'' and d).

In terms of biological role, subunit of the peripheral V1 complex of vacuolar ATPase essential for assembly or catalytic function. V-ATPase is responsible for acidifying a variety of intracellular compartments in eukaryotic cells. The sequence is that of V-type proton ATPase subunit E (VATE) from Citrus limon (Lemon).